The chain runs to 1181 residues: Clustered mitochondria protein homolog (1181 aa).

The disordered stretch occupies residues 165 to 195; the sequence is AKAEALAKNEEVSEDEESEPEDDTPMKQSTQ. Acidic residues predominate over residues 176–187; that stretch reads VSEDEESEPEDD. Positions 379-622 constitute a Clu domain; sequence DMARNQELLS…RLAPVDIAFL (244 aa). Positions 1130–1181 are disordered; that stretch reads GRLARQAPKPTATHQKEAPKKASKKTKGKGKGKDDKGEKLVAELKKKKAGKR. The segment covering 1150-1159 has biased composition (basic residues); it reads KASKKTKGKG. Basic and acidic residues predominate over residues 1160–1173; sequence KGKDDKGEKLVAEL.

Belongs to the CLU family. In terms of assembly, may associate with the eukaryotic translation initiation factor 3 (eIF-3) complex.

It is found in the cytoplasm. Its function is as follows. mRNA-binding protein involved in proper cytoplasmic distribution of mitochondria. The chain is Clustered mitochondria protein homolog from Yarrowia lipolytica (strain CLIB 122 / E 150) (Yeast).